Consider the following 125-residue polypeptide: Small ribosomal subunit protein uS13 (125 aa).

It belongs to the universal ribosomal protein uS13 family. Part of the 30S ribosomal subunit. Forms a loose heterodimer with protein S19. Forms two bridges to the 50S subunit in the 70S ribosome.

Its function is as follows. Located at the top of the head of the 30S subunit, it contacts several helices of the 16S rRNA. In the 70S ribosome it contacts the 23S rRNA (bridge B1a) and protein L5 of the 50S subunit (bridge B1b), connecting the 2 subunits; these bridges are implicated in subunit movement. Contacts the tRNAs in the A and P-sites. This chain is Small ribosomal subunit protein uS13, found in Rickettsia africae (strain ESF-5).